Consider the following 333-residue polypeptide: DNA-directed RNA polymerase subunit alpha (333 aa).

The segment at M1–K246 is alpha N-terminal domain (alpha-NTD). The tract at residues V262 to K333 is alpha C-terminal domain (alpha-CTD).

This sequence belongs to the RNA polymerase alpha chain family. In terms of assembly, homodimer. The RNAP catalytic core consists of 2 alpha, 1 beta, 1 beta' and 1 omega subunit. When a sigma factor is associated with the core the holoenzyme is formed, which can initiate transcription.

It catalyses the reaction RNA(n) + a ribonucleoside 5'-triphosphate = RNA(n+1) + diphosphate. Its function is as follows. DNA-dependent RNA polymerase catalyzes the transcription of DNA into RNA using the four ribonucleoside triphosphates as substrates. In Mycoplasmopsis pulmonis (strain UAB CTIP) (Mycoplasma pulmonis), this protein is DNA-directed RNA polymerase subunit alpha.